The chain runs to 475 residues: Sulfate adenylyltransferase subunit 1 (475 aa).

The tr-type G domain occupies 25–240 (KSLLRFLTCG…VLETVEVINL (216 aa)). The segment at 34-41 (GSVDDGKS) is G1. Position 34-41 (34-41 (GSVDDGKS)) interacts with GTP. The G2 stretch occupies residues 92–96 (GITID). Residues 113-116 (DTPG) are G3. Residues 113-117 (DTPGH) and 168-171 (NKMD) each bind GTP. Residues 168–171 (NKMD) form a G4 region. The segment at 206–208 (SAL) is G5.

The protein belongs to the TRAFAC class translation factor GTPase superfamily. Classic translation factor GTPase family. CysN/NodQ subfamily. In terms of assembly, heterodimer composed of CysD, the smaller subunit, and CysN.

It catalyses the reaction sulfate + ATP + H(+) = adenosine 5'-phosphosulfate + diphosphate. It participates in sulfur metabolism; hydrogen sulfide biosynthesis; sulfite from sulfate: step 1/3. In terms of biological role, with CysD forms the ATP sulfurylase (ATPS) that catalyzes the adenylation of sulfate producing adenosine 5'-phosphosulfate (APS) and diphosphate, the first enzymatic step in sulfur assimilation pathway. APS synthesis involves the formation of a high-energy phosphoric-sulfuric acid anhydride bond driven by GTP hydrolysis by CysN coupled to ATP hydrolysis by CysD. The polypeptide is Sulfate adenylyltransferase subunit 1 (Sodalis glossinidius (strain morsitans)).